The chain runs to 360 residues: Peptide chain release factor 1 (360 aa).

Position 235 is an N5-methylglutamine (Gln-235).

The protein belongs to the prokaryotic/mitochondrial release factor family. Methylated by PrmC. Methylation increases the termination efficiency of RF1.

The protein localises to the cytoplasm. Functionally, peptide chain release factor 1 directs the termination of translation in response to the peptide chain termination codons UAG and UAA. This Cupriavidus taiwanensis (strain DSM 17343 / BCRC 17206 / CCUG 44338 / CIP 107171 / LMG 19424 / R1) (Ralstonia taiwanensis (strain LMG 19424)) protein is Peptide chain release factor 1.